Here is a 1155-residue protein sequence, read N- to C-terminus: Agglutinin-like protein 3 (1155 aa).

An N-terminal signal peptide occupies residues 1–17 (MLQQYTLLLIYLSVATA). Disulfide bonds link C73–C150, C96–C112, C205–C298, and C227–C256. ALS repeat units lie at residues 365 to 396 (TTIT…VDIP), 401 to 432 (TTVT…VQVP), and 438 to 469 (VTTT…IREP). N471 is a glycosylation site (N-linked (GlcNAc...) asparagine). ALS repeat units follow at residues 474–505 (VTTT…IKEP) and 510–541 (VTTT…IREP). N-linked (GlcNAc...) asparagine glycosylation is present at N543. ALS repeat units follow at residues 546–577 (VTTT…IREP) and 582–613 (VTTT…IREP). A glycan (N-linked (GlcNAc...) asparagine) is linked at N615. The ALS 8 repeat unit spans residues 618–649 (VTTTEYWSQSYATTTTITAPPGETDTVLIREP). N651 is a glycosylation site (N-linked (GlcNAc...) asparagine). 2 ALS repeats span residues 654–685 (VTTT…IKEP) and 690–721 (VTTT…IREP). N-linked (GlcNAc...) asparagine glycosylation occurs at N723. The stretch at 726–757 (VTTTEYWSQSYATTTTITAPPGETDTVLIREP) is one ALS 11 repeat. N-linked (GlcNAc...) asparagine glycosylation is present at N759. Residues 762 to 793 (VTTTEYWSQSFATTTTVTAPPGGTDTVIIREP) form an ALS 12 repeat. The N-linked (GlcNAc...) asparagine glycan is linked to N795. 2 ALS repeats span residues 798–829 (VTTT…IREP) and 834–863 (VTTT…VIIY). The N-linked (GlcNAc...) asparagine glycan is linked to N881. Residues 936–1115 (TTTESTLQSP…NSDTQQTTLS (180 aa)) form a disordered region. The span at 949-965 (FSESGVSVETESSTFTT) shows a compositional bias: low complexity. Over residues 966–977 (AQTNPSVPTTES) the composition is skewed to polar residues. Low complexity predominate over residues 1010–1019 (TTSTAASTST). N-linked (GlcNAc...) asparagine glycosylation occurs at N1023. 2 stretches are compositionally biased toward low complexity: residues 1034 to 1058 (ASSP…STSV) and 1071 to 1115 (APSA…TTLS). N-linked (GlcNAc...) asparagine glycosylation occurs at N1099. S1134 carries the GPI-anchor amidated serine lipid modification. Positions 1135-1155 (GSVIQHSTWLCGLITLLSLFI) are cleaved as a propeptide — removed in mature form.

The protein belongs to the ALS family. In terms of processing, the GPI-anchor is attached to the protein in the endoplasmic reticulum and serves to target the protein to the cell surface. There, the glucosamine-inositol phospholipid moiety is cleaved off and the GPI-modified mannoprotein is covalently attached via its lipidless GPI glycan remnant to the 1,6-beta-glucan of the outer cell wall layer.

The protein resides in the cell membrane. The protein localises to the secreted. It is found in the cell wall. Cell surface adhesion protein which mediates both yeast-to-host tissue adherence and yeast aggregation. Plays an important role in the biofilm formation and pathogenesis of C.albicans infections. Necessary for C.albicans to bind to N-cadherin on endothelial cells and E-cadherin on oral epithelial cells and subsequent endocytosis by these cells. During disseminated infection, mediates initial trafficking to the brain and renal cortex and contributes to fungal persistence in the kidneys. This chain is Agglutinin-like protein 3 (ALS3), found in Candida albicans (strain SC5314 / ATCC MYA-2876) (Yeast).